A 242-amino-acid polypeptide reads, in one-letter code: Methylthioribulose-1-phosphate dehydratase (242 aa).

Position 97 (Cys97) interacts with substrate. The Zn(2+) site is built by His115 and His117. The Proton donor/acceptor role is filled by Glu139. His195 contacts Zn(2+).

The protein belongs to the aldolase class II family. MtnB subfamily. Homotetramer. Interacts with APAF1. May interact with CASP1. Zn(2+) serves as cofactor.

It is found in the cytoplasm. It carries out the reaction 5-(methylsulfanyl)-D-ribulose 1-phosphate = 5-methylsulfanyl-2,3-dioxopentyl phosphate + H2O. The protein operates within amino-acid biosynthesis; L-methionine biosynthesis via salvage pathway; L-methionine from S-methyl-5-thio-alpha-D-ribose 1-phosphate: step 2/6. Functionally, catalyzes the dehydration of methylthioribulose-1-phosphate (MTRu-1-P) into 2,3-diketo-5-methylthiopentyl-1-phosphate (DK-MTP-1-P). Functions in the methionine salvage pathway, which plays a key role in cancer, apoptosis, microbial proliferation and inflammation. May inhibit the CASP1-related inflammatory response (pyroptosis), the CASP9-dependent apoptotic pathway and the cytochrome c-dependent and APAF1-mediated cell death. The chain is Methylthioribulose-1-phosphate dehydratase from Bos taurus (Bovine).